A 481-amino-acid polypeptide reads, in one-letter code: Cysteine--tRNA ligase (481 aa).

C29 contributes to the Zn(2+) binding site. The 'HIGH' region motif lies at 31–41 (VTVYDHCHIGH). Zn(2+) is bound by residues C209, H234, and E238. The 'KMSKS' region motif lies at 266–270 (KMSKS). An ATP-binding site is contributed by K269.

This sequence belongs to the class-I aminoacyl-tRNA synthetase family. As to quaternary structure, monomer. The cofactor is Zn(2+).

It is found in the cytoplasm. It catalyses the reaction tRNA(Cys) + L-cysteine + ATP = L-cysteinyl-tRNA(Cys) + AMP + diphosphate. The chain is Cysteine--tRNA ligase from Geobacter sulfurreducens (strain ATCC 51573 / DSM 12127 / PCA).